A 271-amino-acid polypeptide reads, in one-letter code: Sorting nexin-11 (271 aa).

In terms of domain architecture, PX spans 16-132 (VITVRVQDPR…HLFLQSQLSV (117 aa)). Residues R59, K85, and R99 each contribute to the a 1,2-diacyl-sn-glycero-3-phospho-(1D-myo-inositol-3-phosphate) site. The segment at 135–139 (IEACV) is important for membrane trafficking. Positions 185-271 (PRSGRRSSPS…PTQLDTAWDK (87 aa)) are disordered. A compositionally biased stretch (low complexity) spans 213-230 (SEGPSSESPTLLPSSSLP).

The protein belongs to the sorting nexin family. Monomer. Interacts with TRPV3; this interaction promotes TRPV3 trafficking from the cell membrane to lysosome for degradation.

The protein localises to the cell membrane. The protein resides in the endosome. It is found in the cytoplasm. Functionally, phosphoinositide-binding protein involved in protein sorting and membrane trafficking in endosomes. Regulates the levels of TRPV3 by promoting its trafficking from the cell membrane to lysosome for degradation. This Mus musculus (Mouse) protein is Sorting nexin-11 (Snx11).